A 137-amino-acid chain; its full sequence is Venom allergen 4 (137 aa).

The first 19 residues, 1 to 19 (MKTFVLVSCLLVFTQIIYA), serve as a signal peptide directing secretion.

This sequence belongs to the ant venom allergen 2/4 family. Monomer. In terms of tissue distribution, expressed by the venom gland.

Its subcellular location is the secreted. This Solenopsis invicta (Red imported fire ant) protein is Venom allergen 4.